The primary structure comprises 142 residues: Peptide methionine sulfoxide reductase MsrB (142 aa).

The MsrB domain occupies leucine 2 to tyrosine 125. Residue cysteine 114 is the Nucleophile of the active site.

The protein belongs to the MsrB Met sulfoxide reductase family.

It carries out the reaction L-methionyl-[protein] + [thioredoxin]-disulfide + H2O = L-methionyl-(R)-S-oxide-[protein] + [thioredoxin]-dithiol. This is Peptide methionine sulfoxide reductase MsrB from Staphylococcus aureus (strain USA300).